The sequence spans 386 residues: MIRAANGFRISVRNTAVCLAPNFRQLKGFSIINLGSLQYFRYNSVYSKSIRLVNTLENRIVPVYKECASPQSIGGKSNLKQLQWPKPPKNILILKKRMDERVDHCFETLVQHLQQTYPDICIITETDVAKKFSYLNLYTWTEISDLEQKVDAIITVGGDGTILHAASLFARSGMPPILSFSLGTLGFLLPFDFGSFQTAFADFYNSRSFVLMRMRLRVAMKTKLYNESIYAMNEMHIHRGLSPHMAVLKVFVNDKFLTEAVADGLIISTPTGSTAYSLSSGGPIVHPSINALLLTPICPNSLSFRPVLFPDTFKISIETSNKSRVRPQLSIDGRPLGLTDIGQRIDITSVKDNAIPCIIRSHKEDDWVSDIVSLLRWNHPFHRKGW.

The N-terminal 42 residues, 1–42, are a transit peptide targeting the mitochondrion; it reads MIRAANGFRISVRNTAVCLAPNFRQLKGFSIINLGSLQYFRY.

Belongs to the NAD kinase family.

Its subcellular location is the mitochondrion. The catalysed reaction is NADH + ATP = ADP + NADPH + H(+). Its function is as follows. Phosphorylates both NADH and NAD(+), with a preference for NADH. Anti-oxidant factor and key source of the cellular reductant NADPH. This Schizosaccharomyces pombe (strain 972 / ATCC 24843) (Fission yeast) protein is NADH kinase pos5, mitochondrial (pos5).